A 242-amino-acid polypeptide reads, in one-letter code: 3-dehydroquinate dehydratase (242 aa).

Residues 39 to 41 (EVR) and arginine 73 each bind 3-dehydroquinate. Histidine 135 serves as the catalytic Proton donor/acceptor. The Schiff-base intermediate with substrate role is filled by lysine 162. Residues arginine 203 and glutamine 228 each contribute to the 3-dehydroquinate site.

Belongs to the type-I 3-dehydroquinase family. In terms of assembly, homodimer.

The enzyme catalyses 3-dehydroquinate = 3-dehydroshikimate + H2O. It participates in metabolic intermediate biosynthesis; chorismate biosynthesis; chorismate from D-erythrose 4-phosphate and phosphoenolpyruvate: step 3/7. Its function is as follows. Involved in the third step of the chorismate pathway, which leads to the biosynthesis of aromatic amino acids. Catalyzes the cis-dehydration of 3-dehydroquinate (DHQ) and introduces the first double bond of the aromatic ring to yield 3-dehydroshikimate. The protein is 3-dehydroquinate dehydratase of Methanosarcina acetivorans (strain ATCC 35395 / DSM 2834 / JCM 12185 / C2A).